Here is a 449-residue protein sequence, read N- to C-terminus: Myb family transcription factor PHL6 (449 aa).

The interval 49–72 is disordered; it reads PFIRSQSPDSPGQLWPKNSSQSTF. The HTH myb-type domain occupies 238–298; sequence ANQKSRMRWT…HLQKYRLAKY (61 aa). The segment at residues 269 to 294 is a DNA-binding region (H-T-H motif); it reads PKAVKKLMNVEGLTIYHVKSHLQKYR. Residues 301–327 are disordered; the sequence is EKKEEKRTDNSEEKKLALSKSEADEKK. The segment at 334-354 is coiled coil; it reads TEALRMQMEVQKQLHEQLEVQ. The short motif at 347 to 352 is the LHEQLE element; sequence LHEQLE. The tract at residues 376–449 is disordered; it reads RKTGRWISSS…NIAESEDPKR (74 aa). The span at 381-410 shows a compositional bias: polar residues; it reads WISSSSQTVLSPSDDSIPDSQNMSKTKASS.

This sequence belongs to the MYB-CC family.

It localises to the nucleus. The chain is Myb family transcription factor PHL6 from Arabidopsis thaliana (Mouse-ear cress).